The chain runs to 462 residues: Elongation factor 1-alpha 1 (462 aa).

G2 is modified (n,N,N-trimethylglycine). The 238-residue stretch at K5–T242 folds into the tr-type G domain. Residues G14–S21 are G1. Position 14–21 (G14–S21) interacts with GTP. The segment at G70 to D74 is G2. The G3 stretch occupies residues D91–G94. Residues N153–D156 and S194–W196 contribute to the GTP site. Residues N153–D156 are G4. The interval S194–W196 is G5. 5-glutamyl glycerylphosphorylethanolamine is present on residues E301 and E374.

The protein belongs to the TRAFAC class translation factor GTPase superfamily. Classic translation factor GTPase family. EF-Tu/EF-1A subfamily.

It is found in the cytoplasm. It catalyses the reaction GTP + H2O = GDP + phosphate + H(+). Translation elongation factor that catalyzes the GTP-dependent binding of aminoacyl-tRNA (aa-tRNA) to the A-site of ribosomes during the elongation phase of protein synthesis. Base pairing between the mRNA codon and the aa-tRNA anticodon promotes GTP hydrolysis, releasing the aa-tRNA from EEF1A1 and allowing its accommodation into the ribosome. The growing protein chain is subsequently transferred from the P-site peptidyl tRNA to the A-site aa-tRNA, extending it by one amino acid through ribosome-catalyzed peptide bond formation. In Gallus gallus (Chicken), this protein is Elongation factor 1-alpha 1 (EEF1A).